A 208-amino-acid polypeptide reads, in one-letter code: MAKVLYITAHPFNELVSNSMAAGKAFIETYQQQHPDDEVKHIDLFETYIPVIDKDVLTGWGKMSNGETLTDDEQMKVSRLSDILEEFLSADKYVFVTPMWNLSFPPVVKAYIDAISIAGKTFKYSAEGPQGLLTDKKVLHIQSRGGYYTEGPAANFEMGDRYLRTIMTFLGVPSYETIIIEGHNAEPHKTEEIKATSINNAEKLATTF.

Residues 17–19 (SNS), 99–102 (MWNL), and 143–146 (SRGG) contribute to the FMN site.

It belongs to the azoreductase type 1 family. Homodimer. FMN is required as a cofactor.

It carries out the reaction 2 a quinone + NADH + H(+) = 2 a 1,4-benzosemiquinone + NAD(+). The enzyme catalyses N,N-dimethyl-1,4-phenylenediamine + anthranilate + 2 NAD(+) = 2-(4-dimethylaminophenyl)diazenylbenzoate + 2 NADH + 2 H(+). Its function is as follows. Quinone reductase that provides resistance to thiol-specific stress caused by electrophilic quinones. Functionally, also exhibits azoreductase activity. Catalyzes the reductive cleavage of the azo bond in aromatic azo compounds to the corresponding amines. In Staphylococcus aureus (strain bovine RF122 / ET3-1), this protein is FMN-dependent NADH:quinone oxidoreductase.